Consider the following 181-residue polypeptide: Small ribosomal subunit protein uS4 (181 aa).

An S4 RNA-binding domain is found at 108 to 177 (RRLQTMVYRQ…EGHPEIERIN (70 aa)). The interval 161–181 (GTSPLTSEGHPEIERINKKRR) is disordered. Residues 169-181 (GHPEIERINKKRR) are compositionally biased toward basic and acidic residues.

Belongs to the universal ribosomal protein uS4 family. As to quaternary structure, part of the 30S ribosomal subunit. Contacts protein S5. The interaction surface between S4 and S5 is involved in control of translational fidelity.

In terms of biological role, one of the primary rRNA binding proteins, it binds directly to 16S rRNA where it nucleates assembly of the body of the 30S subunit. With S5 and S12 plays an important role in translational accuracy. In Methanosphaerula palustris (strain ATCC BAA-1556 / DSM 19958 / E1-9c), this protein is Small ribosomal subunit protein uS4.